Reading from the N-terminus, the 361-residue chain is Chorismate synthase (361 aa).

Positions 48 and 54 each coordinate NADP(+). Residues 125-127 (RSS), 238-239 (NA), glycine 278, 293-297 (KPTSS), and arginine 319 contribute to the FMN site.

Belongs to the chorismate synthase family. In terms of assembly, homotetramer. FMNH2 serves as cofactor.

The catalysed reaction is 5-O-(1-carboxyvinyl)-3-phosphoshikimate = chorismate + phosphate. The protein operates within metabolic intermediate biosynthesis; chorismate biosynthesis; chorismate from D-erythrose 4-phosphate and phosphoenolpyruvate: step 7/7. Catalyzes the anti-1,4-elimination of the C-3 phosphate and the C-6 proR hydrogen from 5-enolpyruvylshikimate-3-phosphate (EPSP) to yield chorismate, which is the branch point compound that serves as the starting substrate for the three terminal pathways of aromatic amino acid biosynthesis. This reaction introduces a second double bond into the aromatic ring system. The protein is Chorismate synthase of Shigella flexneri serotype 5b (strain 8401).